The chain runs to 347 residues: Hyaluronidase conohyal-ad1 (347 aa).

The N-terminal stretch at 1–18 (MRAVVVVTGLVVVVVTTT) is a signal peptide. A propeptide spanning residues 19-33 (LSLQDHDVKSASSPL) is cleaved from the precursor. The tract at residues 27–49 (KSASSPLSSSVDQGSSGDDCDEG) is disordered. Residues 28–43 (SASSPLSSSVDQGSSG) show a composition bias toward low complexity. A disulfide bridge connects residues C67 and C343. The active-site Proton donor is the E150.

This sequence belongs to the glycosyl hydrolase 56 family. Contains 4 disulfide bonds. In terms of processing, is N-linked glycosylated at three positions. As to expression, expressed by the venom duct.

It localises to the secreted. It catalyses the reaction Random hydrolysis of (1-&gt;4)-linkages between N-acetyl-beta-D-glucosamine and D-glucuronate residues in hyaluronate.. In terms of biological role, hyaluronidase catalyzes the hydrolysis of hyaluronic acid (HA), an anionic, nonsulfated glycosaminoglycan distributed widely throughout connective, epithelial, and neural tissues. In venom, they are known to enhance diffusion of the venom by degrading the extracellular matrix. This is Hyaluronidase conohyal-ad1 from Conus adamsonii (Rhododendron cone).